The chain runs to 617 residues: Dihydroxy-acid dehydratase (617 aa).

Mg(2+) is bound at residue aspartate 81. A [2Fe-2S] cluster-binding site is contributed by cysteine 122. Mg(2+) is bound by residues aspartate 123 and lysine 124. Lysine 124 carries the post-translational modification N6-carboxylysine. Cysteine 195 serves as a coordination point for [2Fe-2S] cluster. Glutamate 491 contacts Mg(2+). Serine 517 serves as the catalytic Proton acceptor.

Belongs to the IlvD/Edd family. As to quaternary structure, homodimer. It depends on [2Fe-2S] cluster as a cofactor. Mg(2+) is required as a cofactor.

The catalysed reaction is (2R)-2,3-dihydroxy-3-methylbutanoate = 3-methyl-2-oxobutanoate + H2O. The enzyme catalyses (2R,3R)-2,3-dihydroxy-3-methylpentanoate = (S)-3-methyl-2-oxopentanoate + H2O. It participates in amino-acid biosynthesis; L-isoleucine biosynthesis; L-isoleucine from 2-oxobutanoate: step 3/4. Its pathway is amino-acid biosynthesis; L-valine biosynthesis; L-valine from pyruvate: step 3/4. Functions in the biosynthesis of branched-chain amino acids. Catalyzes the dehydration of (2R,3R)-2,3-dihydroxy-3-methylpentanoate (2,3-dihydroxy-3-methylvalerate) into 2-oxo-3-methylpentanoate (2-oxo-3-methylvalerate) and of (2R)-2,3-dihydroxy-3-methylbutanoate (2,3-dihydroxyisovalerate) into 2-oxo-3-methylbutanoate (2-oxoisovalerate), the penultimate precursor to L-isoleucine and L-valine, respectively. In Buchnera aphidicola subsp. Diuraphis noxia, this protein is Dihydroxy-acid dehydratase.